We begin with the raw amino-acid sequence, 461 residues long: MDRRIFGIETEFGITFSSKDSRPLSPEEVARYLFRRVVSWGRSSNVFLANGSRLYLDVGSHPEYATAECDEIGQLIAHDRAGELILNELVAEAEKRLNLEGFAGSVYLFKNNTDSAGNSYGSHENYLIGRRGEFARLAEILIPFLVTRQLIAGAGKVHQNAGQANYSFSQRAEHIWEGISSATTRSRPIINTRDEPHADAELYRRLHVIVGDSNMSETTTMLKVGTIDLILRMVEDGVIMRDLRMENPIRSIREISQDLTGMAPVKLANGRVTNALEIQREYFEKVSEYLLTAGAHHALVPRIMDLWQRTLNAIEQQDFSSIETEIDWAIKKKLLDAYQAKNSLTLNSPRLAQIDLAYHDIATDRGLYYLLQKRGAVARVNEDGQAMAAIEAPPATTRAALRGKFVKAAQSAGRDYTVDWVHLKLNDQAHQTVLCKDPFRNTDERVDALIASLGTESDFSD.

Glu9 provides a ligand contact to Mg(2+). Arg53 contacts ATP. Tyr55 contributes to the Mg(2+) binding site. Residue Asp57 is the Proton acceptor of the active site. Glu63 provides a ligand contact to Mg(2+). ATP-binding residues include Thr66 and Trp420.

It belongs to the Pup ligase/Pup deamidase family. Pup-conjugating enzyme subfamily.

The catalysed reaction is ATP + [prokaryotic ubiquitin-like protein]-L-glutamate + [protein]-L-lysine = ADP + phosphate + N(6)-([prokaryotic ubiquitin-like protein]-gamma-L-glutamyl)-[protein]-L-lysine.. The protein operates within protein degradation; proteasomal Pup-dependent pathway. Its pathway is protein modification; protein pupylation. Its function is as follows. Catalyzes the covalent attachment of the prokaryotic ubiquitin-like protein modifier Pup to the proteasomal substrate proteins, thereby targeting them for proteasomal degradation. This tagging system is termed pupylation. The ligation reaction involves the side-chain carboxylate of the C-terminal glutamate of Pup and the side-chain amino group of a substrate lysine. In Renibacterium salmoninarum (strain ATCC 33209 / DSM 20767 / JCM 11484 / NBRC 15589 / NCIMB 2235), this protein is Pup--protein ligase.